The sequence spans 218 residues: Ras-related protein Rab-4A (218 aa).

GDP-binding residues include Gly23, Thr24, Gly25, Lys26, Ser27, and Cys28. Positions 23, 24, 25, 26, 27, 28, 42, 44, and 45 each coordinate GTP. Position 27 (Ser27) interacts with Mg(2+). Positions 44–49 (HTIGVE) match the Switch 1 motif. 2 residues coordinate Mg(2+): Thr45 and Asp68. Residues 70–79 (AGQERFRSVT) carry the Switch 2 motif. A GTP-binding site is contributed by Gly71. A 5-glutamyl serotonin modification is found at Gln72. Positions 126, 127, 129, 157, and 158 each coordinate GDP. GTP is bound by residues Asn126, Lys127, Asp129, Ala157, and Leu158. At Ser190 the chain carries Phosphoserine. A Phosphoserine; by CDK1 modification is found at Ser204. Residues Cys216 and Cys218 are each lipidated (S-geranylgeranyl cysteine). At Cys218 the chain carries Cysteine methyl ester.

The protein belongs to the small GTPase superfamily. Rab family. Interacts with SGSM1, SGSM2 and SGSM3. Interacts with RAB11FIP1, RABEP1, ZFYVE20 and RUFY1. Interacts (membrane-bound form) with NDRG1; the interaction involves NDRG1 in vesicular recycling of E-cadherin. Interacts (in GTP-bound form) with GRIPAP1 (via N-terminus). Interacts with RABEP1 and RBSN. Does not interact with HPS4. Interacts with RABEP2; this interaction may mediate VEGFR2 cell surface expression. It depends on Mg(2+) as a cofactor. Phosphorylated by CDK1 kinase during mitosis. In terms of processing, serotonylation of Gln-72 by TGM2 during activation and aggregation of platelets leads to constitutive activation of GTPase activity.

The protein localises to the membrane. It localises to the cytoplasm. Its subcellular location is the early endosome membrane. The protein resides in the recycling endosome membrane. The catalysed reaction is GTP + H2O = GDP + phosphate + H(+). With respect to regulation, regulated by guanine nucleotide exchange factors (GEFs) which promote the exchange of bound GDP for free GTP. Regulated by GTPase activating proteins (GAPs) which increase the GTP hydrolysis activity. Inhibited by GDP dissociation inhibitors (GDIs). Its function is as follows. The small GTPases Rab are key regulators of intracellular membrane trafficking, from the formation of transport vesicles to their fusion with membranes. Rabs cycle between an inactive GDP-bound form and an active GTP-bound form that is able to recruit to membranes different sets of downstream effectors directly responsible for vesicle formation, movement, tethering and fusion. RAB4A is involved in protein transport. Also plays a role in vesicular traffic. Mediates VEGFR2 endosomal trafficking to enhance VEGFR2 signaling. Acts as a regulator of platelet alpha-granule release during activation and aggregation of platelets. The sequence is that of Ras-related protein Rab-4A from Homo sapiens (Human).